The following is a 372-amino-acid chain: NAD(P)H-quinone oxidoreductase subunit 1 (372 aa).

Transmembrane regions (helical) follow at residues 27 to 47 (IIWL…GVLV), 97 to 117 (ILFT…WLIV), 128 to 148 (VGIG…GLLM), 176 to 196 (LALS…IDIV), 204 to 224 (ILSW…ICAL), 266 to 286 (ILSA…PIPV), 308 to 328 (SIGI…AILL), and 347 to 367 (FLLP…LALP).

Belongs to the complex I subunit 1 family. In terms of assembly, NDH-1 is composed of at least 11 different subunits.

It is found in the cellular thylakoid membrane. It catalyses the reaction a plastoquinone + NADH + (n+1) H(+)(in) = a plastoquinol + NAD(+) + n H(+)(out). The enzyme catalyses a plastoquinone + NADPH + (n+1) H(+)(in) = a plastoquinol + NADP(+) + n H(+)(out). Its function is as follows. NDH-1 shuttles electrons from an unknown electron donor, via FMN and iron-sulfur (Fe-S) centers, to quinones in the respiratory and/or the photosynthetic chain. The immediate electron acceptor for the enzyme in this species is believed to be plastoquinone. Couples the redox reaction to proton translocation, and thus conserves the redox energy in a proton gradient. In Prochlorococcus marinus (strain MIT 9515), this protein is NAD(P)H-quinone oxidoreductase subunit 1.